A 106-amino-acid polypeptide reads, in one-letter code: Large ribosomal subunit protein P2A (106 aa).

K2 participates in a covalent cross-link: Glycyl lysine isopeptide (Lys-Gly) (interchain with G-Cter in ubiquitin). T16 is subject to Phosphothreonine. Phosphoserine is present on residues S40 and S43. Residue K48 forms a Glycyl lysine isopeptide (Lys-Gly) (interchain with G-Cter in ubiquitin) linkage. Phosphoserine is present on S49. The segment covering 65-82 (PAAGPASAGGAAAASGDA) has biased composition (low complexity). The segment at 65 to 106 (PAAGPASAGGAAAASGDAAAEEEKEEEAAEESDDDMGFGLFD) is disordered. The span at 83–100 (AAEEEKEEEAAEESDDDM) shows a compositional bias: acidic residues. S96 is subject to Phosphoserine.

It belongs to the eukaryotic ribosomal protein P1/P2 family. As to quaternary structure, component of the large ribosomal subunit (LSU). Mature yeast ribosomes consist of a small (40S) and a large (60S) subunit. The 40S small subunit contains 1 molecule of ribosomal RNA (18S rRNA) and 33 different proteins (encoded by 57 genes). The large 60S subunit contains 3 rRNA molecules (25S, 5.8S and 5S rRNA) and 46 different proteins (encoded by 81 genes). The 5 acidic ribosomal P-proteins form the stalk structure of the 60S subunit. They are organized as a pentameric complex in which uL10/P0 interacts with 2 heterodimers, P1A-P2B and P1B-P2A. In terms of processing, phosphorylation is not involved in the interaction of the acidic P proteins with the ribosome, however it is suggested to affect the ribosome activity and to participate in a possible ribosome regulatory mechanism. Post-translationally, the N-terminus is not modified.

The protein localises to the cytoplasm. In terms of biological role, component of the ribosome, a large ribonucleoprotein complex responsible for the synthesis of proteins in the cell. The small ribosomal subunit (SSU) binds messenger RNAs (mRNAs) and translates the encoded message by selecting cognate aminoacyl-transfer RNA (tRNA) molecules. The large subunit (LSU) contains the ribosomal catalytic site termed the peptidyl transferase center (PTC), which catalyzes the formation of peptide bonds, thereby polymerizing the amino acids delivered by tRNAs into a polypeptide chain. The nascent polypeptides leave the ribosome through a tunnel in the LSU and interact with protein factors that function in enzymatic processing, targeting, and the membrane insertion of nascent chains at the exit of the ribosomal tunnel. This chain is Large ribosomal subunit protein P2A, found in Saccharomyces cerevisiae (strain ATCC 204508 / S288c) (Baker's yeast).